Here is a 40-residue protein sequence, read N- to C-terminus: MLRWVREITGWMVWIPDKARYAGIRETSGCGLGGSPLWEI.

This is an uncharacterized protein from Leptolyngbya boryana (Plectonema boryanum).